The following is a 286-amino-acid chain: Pantothenate synthetase (286 aa).

30-37 (MGNLHRGH) provides a ligand contact to ATP. H37 serves as the catalytic Proton donor. A (R)-pantoate-binding site is contributed by Q61. Beta-alanine is bound at residue Q61. Residue 149-152 (GEKD) participates in ATP binding. Position 155 (Q155) interacts with (R)-pantoate. Residues V178 and 186-189 (LSSR) contribute to the ATP site.

It belongs to the pantothenate synthetase family. Homodimer.

It localises to the cytoplasm. The enzyme catalyses (R)-pantoate + beta-alanine + ATP = (R)-pantothenate + AMP + diphosphate + H(+). The protein operates within cofactor biosynthesis; (R)-pantothenate biosynthesis; (R)-pantothenate from (R)-pantoate and beta-alanine: step 1/1. In terms of biological role, catalyzes the condensation of pantoate with beta-alanine in an ATP-dependent reaction via a pantoyl-adenylate intermediate. The chain is Pantothenate synthetase from Nitrosococcus oceani (strain ATCC 19707 / BCRC 17464 / JCM 30415 / NCIMB 11848 / C-107).